The primary structure comprises 102 residues: Small ribosomal subunit protein uS10 (102 aa).

It belongs to the universal ribosomal protein uS10 family. Part of the 30S ribosomal subunit.

Functionally, involved in the binding of tRNA to the ribosomes. This Clostridium beijerinckii (strain ATCC 51743 / NCIMB 8052) (Clostridium acetobutylicum) protein is Small ribosomal subunit protein uS10.